Here is a 273-residue protein sequence, read N- to C-terminus: Proteasome subunit beta (273 aa).

Positions 1–50 (MRKDGARLALPLFDPRHDPGPDFAALVSRDAARTVPTSGDGSLGAQVPHG) are cleaved as a propeptide — removed in mature form; by autocatalysis. Thr51 (nucleophile) is an active-site residue.

It belongs to the peptidase T1B family. In terms of assembly, the 20S proteasome core is composed of 14 alpha and 14 beta subunits that assemble into four stacked heptameric rings, resulting in a barrel-shaped structure. The two inner rings, each composed of seven catalytic beta subunits, are sandwiched by two outer rings, each composed of seven alpha subunits. The catalytic chamber with the active sites is on the inside of the barrel. Has a gated structure, the ends of the cylinder being occluded by the N-termini of the alpha-subunits. Is capped by the proteasome-associated ATPase, ARC.

The protein resides in the cytoplasm. The catalysed reaction is Cleavage of peptide bonds with very broad specificity.. It functions in the pathway protein degradation; proteasomal Pup-dependent pathway. With respect to regulation, the formation of the proteasomal ATPase ARC-20S proteasome complex, likely via the docking of the C-termini of ARC into the intersubunit pockets in the alpha-rings, may trigger opening of the gate for substrate entry. Interconversion between the open-gate and close-gate conformations leads to a dynamic regulation of the 20S proteasome proteolysis activity. Functionally, component of the proteasome core, a large protease complex with broad specificity involved in protein degradation. The polypeptide is Proteasome subunit beta (Acidimicrobium ferrooxidans (strain DSM 10331 / JCM 15462 / NBRC 103882 / ICP)).